Here is a 435-residue protein sequence, read N- to C-terminus: 3-ketoacyl-CoA thiolase (435 aa).

The active-site Acyl-thioester intermediate is the cysteine 98. Active-site proton acceptor residues include histidine 391 and cysteine 421.

This sequence belongs to the thiolase-like superfamily. Thiolase family. Heterotetramer of two alpha chains (FadJ) and two beta chains (FadI).

Its subcellular location is the cytoplasm. It catalyses the reaction an acyl-CoA + acetyl-CoA = a 3-oxoacyl-CoA + CoA. It participates in lipid metabolism; fatty acid beta-oxidation. Its function is as follows. Catalyzes the final step of fatty acid oxidation in which acetyl-CoA is released and the CoA ester of a fatty acid two carbons shorter is formed. The protein is 3-ketoacyl-CoA thiolase of Vibrio parahaemolyticus serotype O3:K6 (strain RIMD 2210633).